The chain runs to 206 residues: Holliday junction branch migration complex subunit RuvA (206 aa).

Residues 1–64 (MIGRLTGNLV…ETSQQLFGFI (64 aa)) form a domain I region. A domain II region spans residues 65–142 (DQQDREFFRM…SWQVTPSVDA (78 aa)). Residues 143–154 (TGSLVALDSAAP) are flexible linker. Residues 155–206 (SQNAIVAEAESALVALGYKPVEASKAVARVTSDEITRSEDLIRLALRNMIPA) are domain III.

Belongs to the RuvA family. As to quaternary structure, homotetramer. Forms an RuvA(8)-RuvB(12)-Holliday junction (HJ) complex. HJ DNA is sandwiched between 2 RuvA tetramers; dsDNA enters through RuvA and exits via RuvB. An RuvB hexamer assembles on each DNA strand where it exits the tetramer. Each RuvB hexamer is contacted by two RuvA subunits (via domain III) on 2 adjacent RuvB subunits; this complex drives branch migration. In the full resolvosome a probable DNA-RuvA(4)-RuvB(12)-RuvC(2) complex forms which resolves the HJ.

Its subcellular location is the cytoplasm. Functionally, the RuvA-RuvB-RuvC complex processes Holliday junction (HJ) DNA during genetic recombination and DNA repair, while the RuvA-RuvB complex plays an important role in the rescue of blocked DNA replication forks via replication fork reversal (RFR). RuvA specifically binds to HJ cruciform DNA, conferring on it an open structure. The RuvB hexamer acts as an ATP-dependent pump, pulling dsDNA into and through the RuvAB complex. HJ branch migration allows RuvC to scan DNA until it finds its consensus sequence, where it cleaves and resolves the cruciform DNA. This is Holliday junction branch migration complex subunit RuvA from Teredinibacter turnerae (strain ATCC 39867 / T7901).